Consider the following 309-residue polypeptide: MGLGNESSLMDFILLGFSDHPRLEAVLFVFVLFFYLLTLVGNFTIIIISYLDPPLHTPMYFFLSNLSLLDICFTTSLAPQTLVNLQRPKKTITYGGCVAQLYISLALGSTECILLADMALDRYIAVCKPLHYVVIMNPRLCQQLASISWLSGLASSLIHATFTLQLPLCGNHRLDHFICEVPALLKLACVDTTVNELVLFVVSVLFVVIPPALISISYGFITQAVLRIKSVEARHKAFSTCSSHLTVVIIFYGTIIYVYLQPSDSYAQDQGKFISLFYTMVTPTLNPIIYTLRNKDMKEALRKLLSGKL.

At 1–25 (MGLGNESSLMDFILLGFSDHPRLEA) the chain is on the extracellular side. N-linked (GlcNAc...) asparagine glycosylation is present at Asn-5. Residues 26–49 (VLFVFVLFFYLLTLVGNFTIIIIS) traverse the membrane as a helical segment. Residues 50-57 (YLDPPLHT) lie on the Cytoplasmic side of the membrane. A helical transmembrane segment spans residues 58–79 (PMYFFLSNLSLLDICFTTSLAP). Residues 80 to 100 (QTLVNLQRPKKTITYGGCVAQ) are Extracellular-facing. Cys-97 and Cys-189 are joined by a disulfide. A helical membrane pass occupies residues 101-120 (LYISLALGSTECILLADMAL). Topologically, residues 121-139 (DRYIAVCKPLHYVVIMNPR) are cytoplasmic. A helical membrane pass occupies residues 140-158 (LCQQLASISWLSGLASSLI). Residues 159–195 (HATFTLQLPLCGNHRLDHFICEVPALLKLACVDTTVN) lie on the Extracellular side of the membrane. Residues 196–219 (ELVLFVVSVLFVVIPPALISISYG) form a helical membrane-spanning segment. Topologically, residues 220–236 (FITQAVLRIKSVEARHK) are cytoplasmic. Residues 237 to 259 (AFSTCSSHLTVVIIFYGTIIYVY) form a helical membrane-spanning segment. The Extracellular segment spans residues 260-272 (LQPSDSYAQDQGK). A helical membrane pass occupies residues 273–292 (FISLFYTMVTPTLNPIIYTL). Topologically, residues 293–309 (RNKDMKEALRKLLSGKL) are cytoplasmic.

Belongs to the G-protein coupled receptor 1 family.

It localises to the cell membrane. Odorant receptor. This chain is Olfactory receptor 2G3 (OR2G3), found in Homo sapiens (Human).